We begin with the raw amino-acid sequence, 272 residues long: Acetylglutamate kinase (272 aa).

Substrate-binding positions include 46-47, R68, and N166; that span reads GA.

It belongs to the acetylglutamate kinase family. ArgB subfamily.

It is found in the cytoplasm. The catalysed reaction is N-acetyl-L-glutamate + ATP = N-acetyl-L-glutamyl 5-phosphate + ADP. It functions in the pathway amino-acid biosynthesis; L-arginine biosynthesis; N(2)-acetyl-L-ornithine from L-glutamate: step 2/4. Its function is as follows. Catalyzes the ATP-dependent phosphorylation of N-acetyl-L-glutamate. This chain is Acetylglutamate kinase, found in Dehalococcoides mccartyi (strain CBDB1).